The sequence spans 284 residues: Bifunctional protein FolD 2 (284 aa).

Residues 165 to 167, Thr-192, and Val-233 contribute to the NADP(+) site; that span reads GRG.

It belongs to the tetrahydrofolate dehydrogenase/cyclohydrolase family. Homodimer.

It carries out the reaction (6R)-5,10-methylene-5,6,7,8-tetrahydrofolate + NADP(+) = (6R)-5,10-methenyltetrahydrofolate + NADPH. It catalyses the reaction (6R)-5,10-methenyltetrahydrofolate + H2O = (6R)-10-formyltetrahydrofolate + H(+). It functions in the pathway one-carbon metabolism; tetrahydrofolate interconversion. Functionally, catalyzes the oxidation of 5,10-methylenetetrahydrofolate to 5,10-methenyltetrahydrofolate and then the hydrolysis of 5,10-methenyltetrahydrofolate to 10-formyltetrahydrofolate. The chain is Bifunctional protein FolD 2 from Streptomyces avermitilis (strain ATCC 31267 / DSM 46492 / JCM 5070 / NBRC 14893 / NCIMB 12804 / NRRL 8165 / MA-4680).